The primary structure comprises 205 residues: Protein N-terminal glutamine amidohydrolase (205 aa).

Residues Cys28, His81, and Asp97 contribute to the active site.

Belongs to the NTAQ1 family. Monomer.

It is found in the cytoplasm. The protein resides in the cytosol. It localises to the nucleus. The enzyme catalyses N-terminal L-glutaminyl-[protein] + H2O = N-terminal L-glutamyl-[protein] + NH4(+). Its function is as follows. Mediates the side-chain deamidation of N-terminal glutamine residues to glutamate, an important step in N-end rule pathway of protein degradation. Conversion of the resulting N-terminal glutamine to glutamate renders the protein susceptible to arginylation, polyubiquitination and degradation as specified by the N-end rule. Does not act on substrates with internal or C-terminal glutamine and does not act on non-glutamine residues in any position. Does not deaminate acetylated N-terminal glutamine. With the exception of proline, all tested second-position residues on substrate peptides do not greatly influence the activity. In contrast, a proline at position 2, virtually abolishes deamidation of N-terminal glutamine. In Homo sapiens (Human), this protein is Protein N-terminal glutamine amidohydrolase.